The primary structure comprises 125 residues: Protein ApaG (125 aa).

An ApaG domain is found at 3-125; it reads TAVTEGIEVT…FPLVVPGSLN (123 aa).

The sequence is that of Protein ApaG from Anaeromyxobacter dehalogenans (strain 2CP-C).